The chain runs to 177 residues: Ribosome maturation factor RimM (177 aa).

The 74-residue stretch at 101–174 folds into the PRC barrel domain; sequence EGEFHLLDLV…WLLLTPPPGL (74 aa).

This sequence belongs to the RimM family. In terms of assembly, binds ribosomal protein uS19.

The protein localises to the cytoplasm. Functionally, an accessory protein needed during the final step in the assembly of 30S ribosomal subunit, possibly for assembly of the head region. Essential for efficient processing of 16S rRNA. May be needed both before and after RbfA during the maturation of 16S rRNA. It has affinity for free ribosomal 30S subunits but not for 70S ribosomes. This is Ribosome maturation factor RimM from Synechococcus sp. (strain CC9605).